The chain runs to 357 residues: Phospho-N-acetylmuramoyl-pentapeptide-transferase (357 aa).

Transmembrane regions (helical) follow at residues 23–43, 70–90, 91–111, 127–147, 171–191, 196–216, 236–256, 260–280, 286–306, and 334–354; these read AIFSLLTSFFINLYIGPYFIY, TMGGIFIIFSILFSTILYCNL, SNIYIWYVISILIGYGLIGFI, LKWKYFFLSIIAFIFICMIKI, YLYIFLSYFVLVGTSNAVNLT, GLAIMPVIFLTCGLTLISLFS, LAILCMAIVGSGLGFLWFNSY, VFMGDVGSLALGGSLGAIAIL, LLIIMGGIFVFETISVILQII, and LIIVRFWIVSLILLLISLISL.

It belongs to the glycosyltransferase 4 family. MraY subfamily. It depends on Mg(2+) as a cofactor.

It localises to the cell inner membrane. It catalyses the reaction UDP-N-acetyl-alpha-D-muramoyl-L-alanyl-gamma-D-glutamyl-meso-2,6-diaminopimeloyl-D-alanyl-D-alanine + di-trans,octa-cis-undecaprenyl phosphate = di-trans,octa-cis-undecaprenyl diphospho-N-acetyl-alpha-D-muramoyl-L-alanyl-D-glutamyl-meso-2,6-diaminopimeloyl-D-alanyl-D-alanine + UMP. The protein operates within cell wall biogenesis; peptidoglycan biosynthesis. In terms of biological role, catalyzes the initial step of the lipid cycle reactions in the biosynthesis of the cell wall peptidoglycan: transfers peptidoglycan precursor phospho-MurNAc-pentapeptide from UDP-MurNAc-pentapeptide onto the lipid carrier undecaprenyl phosphate, yielding undecaprenyl-pyrophosphoryl-MurNAc-pentapeptide, known as lipid I. This is Phospho-N-acetylmuramoyl-pentapeptide-transferase from Buchnera aphidicola subsp. Acyrthosiphon pisum (strain APS) (Acyrthosiphon pisum symbiotic bacterium).